A 132-amino-acid chain; its full sequence is Fatty acid-binding protein, brain (132 aa).

An N-acetylvaline modification is found at Val2. A fatty acid is bound at residue Arg127 to Tyr129.

The protein belongs to the calycin superfamily. Fatty-acid binding protein (FABP) family.

It localises to the cytoplasm. In terms of biological role, FABPs are thought to play a role in the intracellular transport of long-chain fatty acids and their acyl-CoA esters. This is Fatty acid-binding protein, brain (FABP7) from Gallus gallus (Chicken).